Consider the following 1258-residue polypeptide: Non-secreted LysM effector LysM19 (1258 aa).

The tract at residues Val148–Ser168 is disordered. Residues Ser157–Ser168 show a composition bias toward basic and acidic residues. 2 consecutive LysM domains span residues Ile1028–Leu1073 and Arg1179–Thr1227.

It belongs to the secreted LysM effector family.

Its function is as follows. Non-secreted LysM effector that might be involved in manipulation of host defenses for successful infection. The sequence is that of Non-secreted LysM effector LysM19 from Penicillium expansum (Blue mold rot fungus).